The sequence spans 154 residues: Major allergen Api g 1, isoallergen 1 (154 aa).

This sequence belongs to the BetVI family.

This is Major allergen Api g 1, isoallergen 1 from Apium graveolens (Celery).